The primary structure comprises 1196 residues: RNA-dependent RNA polymerase 6 (1196 aa).

The protein belongs to the RdRP family. As to quaternary structure, interacts with SGS3. As to expression, widely expressed.

Its subcellular location is the cytoplasmic granule. The protein resides in the nucleus. It catalyses the reaction RNA(n) + a ribonucleoside 5'-triphosphate = RNA(n+1) + diphosphate. RNA-dependent RNA polymerase involved in post-transcriptional gene silencing (PTGS). Possesses ssRNA and ssDNA-dependent polymerase activity, but does not have priming activity. Possesses in vitro 3' nucleotidyltransferase activity in the presence of UTP as single nucleotide. Required for the production of 21 nucleotide trans-acting small interfering RNAs (ta-siRNAs) derived from TAS1, TAS2 and TAS3 endogenous transcripts. Acts in the RDR6/SGS3/DCL4/AGO7 ta-siRNA pathway involved in leaf developmental timing. Required for the production of natural siRNAs (nat-siRNAs) derived from cis-natural antisense transcripts. Required for the production of 24 nucleotide nat-siRNAs derived from the stress-related P5CDH-SRO5 antisense gene pair. Required for PTGS induced by transgene direct repeats. Plays an essential role in transitive silencing of transgenes by processing secondary siRNAs. This pathway, which requires DCL2 and DCL4, amplifies silencing by using the target RNA as substrate to generate secondary siRNAs, providing an efficient mechanism for long-distance silencing. Involved in the biogenesis of secondary siRNAs which require 22 nucleotide miRNAs associated to AGO1. Participates synergistically with AS1 and AS2 to proper plant development by repressing the miR165 and miR166 microRNAs (independently of AGO10) that may lead to mRNA degradation of genes in the class III HD-ZIP family. Required for the production of some small RNAs derived from the crucifer-infecting tobamovirus (TMV-cg). Required for sense virus-induced post-transcriptional gene silencing (S-PTGS). The chain is RNA-dependent RNA polymerase 6 (RDR6) from Arabidopsis thaliana (Mouse-ear cress).